The primary structure comprises 130 residues: uncharacterized protein (130 aa).

Residues 21-43 form a helical membrane-spanning segment; it reads VAVCTVAAEVLAIFTLVCTRVFI.

The protein resides in the membrane. This is an uncharacterized protein from Saccharomyces cerevisiae (strain ATCC 204508 / S288c) (Baker's yeast).